Here is a 361-residue protein sequence, read N- to C-terminus: Beta-hexosaminidase (361 aa).

Substrate contacts are provided by residues Asp69, Arg77, Arg144, and 174–175 (KH). His187 functions as the Proton donor/acceptor in the catalytic mechanism. The Nucleophile role is filled by Asp258.

Belongs to the glycosyl hydrolase 3 family. NagZ subfamily.

The protein localises to the cytoplasm. The catalysed reaction is Hydrolysis of terminal non-reducing N-acetyl-D-hexosamine residues in N-acetyl-beta-D-hexosaminides.. It functions in the pathway cell wall biogenesis; peptidoglycan recycling. Functionally, plays a role in peptidoglycan recycling by cleaving the terminal beta-1,4-linked N-acetylglucosamine (GlcNAc) from peptide-linked peptidoglycan fragments, giving rise to free GlcNAc, anhydro-N-acetylmuramic acid and anhydro-N-acetylmuramic acid-linked peptides. This is Beta-hexosaminidase from Neisseria meningitidis serogroup C (strain 053442).